A 492-amino-acid chain; its full sequence is UDP-N-acetylmuramoyl-L-alanyl-D-glutamate--2,6-diaminopimelate ligase (492 aa).

Serine 30 lines the UDP-N-acetyl-alpha-D-muramoyl-L-alanyl-D-glutamate pocket. Position 114 to 120 (glycine 114 to serine 120) interacts with ATP. Residues threonine 156–threonine 157, serine 183, glutamine 189, and arginine 191 contribute to the UDP-N-acetyl-alpha-D-muramoyl-L-alanyl-D-glutamate site. The residue at position 223 (lysine 223) is an N6-carboxylysine. Meso-2,6-diaminopimelate-binding positions include arginine 389, aspartate 413 to arginine 416, glycine 462, and glutamate 466. The Meso-diaminopimelate recognition motif signature appears at aspartate 413–arginine 416.

It belongs to the MurCDEF family. MurE subfamily. Mg(2+) serves as cofactor. Carboxylation is probably crucial for Mg(2+) binding and, consequently, for the gamma-phosphate positioning of ATP.

It is found in the cytoplasm. It catalyses the reaction UDP-N-acetyl-alpha-D-muramoyl-L-alanyl-D-glutamate + meso-2,6-diaminopimelate + ATP = UDP-N-acetyl-alpha-D-muramoyl-L-alanyl-gamma-D-glutamyl-meso-2,6-diaminopimelate + ADP + phosphate + H(+). Its pathway is cell wall biogenesis; peptidoglycan biosynthesis. Functionally, catalyzes the addition of meso-diaminopimelic acid to the nucleotide precursor UDP-N-acetylmuramoyl-L-alanyl-D-glutamate (UMAG) in the biosynthesis of bacterial cell-wall peptidoglycan. The sequence is that of UDP-N-acetylmuramoyl-L-alanyl-D-glutamate--2,6-diaminopimelate ligase from Neisseria meningitidis serogroup B (strain ATCC BAA-335 / MC58).